The primary structure comprises 419 residues: Serine/threonine-protein kinase Kist (419 aa).

The 282-residue stretch at 23 to 304 folds into the Protein kinase domain; that stretch reads WQVQSRLGSG…AEMALCSPFF (282 aa). ATP-binding positions include 29 to 37 and Lys-54; that span reads LGSGSSASV. Residues Asp-141 and Asp-158 each act as proton acceptor in the active site. Residues 324-406 enclose the RRM domain; it reads RLLNVLDDDY…KFVVATFYPL (83 aa).

The protein belongs to the protein kinase superfamily. Ser/Thr protein kinase family. As to quaternary structure, interacts with stathmin, PAM and CDKN1B/p27Kip1.

The protein localises to the nucleus. The enzyme catalyses L-seryl-[protein] + ATP = O-phospho-L-seryl-[protein] + ADP + H(+). It carries out the reaction L-threonyl-[protein] + ATP = O-phospho-L-threonyl-[protein] + ADP + H(+). Its function is as follows. Upon serum stimulation, phosphorylates CDKN1B/p27Kip1, thus controlling CDKN1B subcellular location and cell cycle progression in G1 phase. May be involved in trafficking and/or processing of RNA. This chain is Serine/threonine-protein kinase Kist (UHMK1), found in Pongo abelii (Sumatran orangutan).